Here is a 300-residue protein sequence, read N- to C-terminus: Non-secreted LysM effector LysM16 (300 aa).

The region spanning 176–222 (EWHTVFSGDTCQLIEAEYGITLEKFIALNTYVNSTCGNIWPDYAYCV) is the LysM domain.

The protein belongs to the secreted LysM effector family.

Non-secreted LysM effector that might be involved in manipulation of host defenses for successful infection. The protein is Non-secreted LysM effector LysM16 of Penicillium expansum (Blue mold rot fungus).